Reading from the N-terminus, the 202-residue chain is Recombination protein RecR (202 aa).

Residues 56 to 71 form a C4-type zinc finger; sequence CVVCGTVSDKEHCRIC. One can recognise a Toprim domain in the interval 79–179; sequence TVICVVEEPK…TVSRLASGLP (101 aa).

This sequence belongs to the RecR family.

Its function is as follows. May play a role in DNA repair. It seems to be involved in an RecBC-independent recombinational process of DNA repair. It may act with RecF and RecO. This Rhodococcus jostii (strain RHA1) protein is Recombination protein RecR.